Reading from the N-terminus, the 486-residue chain is Inosine-5'-monophosphate dehydrogenase (486 aa).

CBS domains follow at residues 99–154 (IVED…LVKE) and 156–215 (MTKE…VRDE). NAD(+)-binding positions include D247 and 294–296 (GIG). Residues G296 and G298 each coordinate K(+). Residue S299 participates in IMP binding. C301 is a K(+) binding site. The active-site Thioimidate intermediate is C301. IMP is bound by residues 334–336 (DGG), 357–358 (GN), and 381–385 (YRGMG). Catalysis depends on R397, which acts as the Proton acceptor. Position 412 (E412) interacts with IMP. Residues E466, S467, and H468 each coordinate K(+).

It belongs to the IMPDH/GMPR family. In terms of assembly, homotetramer. It depends on K(+) as a cofactor.

It catalyses the reaction IMP + NAD(+) + H2O = XMP + NADH + H(+). It functions in the pathway purine metabolism; XMP biosynthesis via de novo pathway; XMP from IMP: step 1/1. Its activity is regulated as follows. Mycophenolic acid (MPA) is a non-competitive inhibitor that prevents formation of the closed enzyme conformation by binding to the same site as the amobile flap. In contrast, mizoribine monophosphate (MZP) is a competitive inhibitor that induces the closed conformation. MPA is a potent inhibitor of mammalian IMPDHs but a poor inhibitor of the bacterial enzymes. MZP is a more potent inhibitor of bacterial IMPDH. Catalyzes the conversion of inosine 5'-phosphate (IMP) to xanthosine 5'-phosphate (XMP), the first committed and rate-limiting step in the de novo synthesis of guanine nucleotides, and therefore plays an important role in the regulation of cell growth. The sequence is that of Inosine-5'-monophosphate dehydrogenase from Pyrococcus horikoshii (strain ATCC 700860 / DSM 12428 / JCM 9974 / NBRC 100139 / OT-3).